The primary structure comprises 311 residues: Olfactory receptor 10G4 (311 aa).

At 1–23 (MSNASLVTAFILTGLPHAPGLDA) the chain is on the extracellular side. N-linked (GlcNAc...) asparagine glycosylation is present at Asn-3. Residues 24–44 (LLFGIFLVVYVLTVLGNLLIL) form a helical membrane-spanning segment. Topologically, residues 45-52 (LVIRVDSH) are cytoplasmic. The helical transmembrane segment at 53–73 (LHTPMYYFLTNLSFIDMWFST) threads the bilayer. The Extracellular portion of the chain corresponds to 74–98 (VTVPKMLMTLVSPSGRAISFHSCVA). A disulfide bridge links Cys-96 with Cys-188. A helical transmembrane segment spans residues 99–119 (QLYFFHFLGSTECFLYTVMSY). Residues 120–138 (DRYLAISYPLRYTSMMSGS) are Cytoplasmic-facing. Residues 139 to 159 (RCALLATGTWLSGSLHSAVQT) form a helical membrane-spanning segment. Topologically, residues 160–196 (ILTFHLPYCGPNQIQHYFCDAPPILKLACADTSANVM) are extracellular. A helical membrane pass occupies residues 197–216 (VIFVDIGIVASGCFVLIVLS). The Cytoplasmic portion of the chain corresponds to 217–236 (YVSIVCSILRIRTSDGRRRA). Residues 237–257 (FQTCASHCIVVLCFFVPCVVI) traverse the membrane as a helical segment. The Extracellular segment spans residues 258 to 268 (YLRPGSMDAMD). Residues 269–289 (GVVAIFYTVLTPLLNPVVYTL) form a helical membrane-spanning segment. At 290 to 311 (RNKEVKKAVLKLRDKVAHPQRK) the chain is on the cytoplasmic side.

The protein belongs to the G-protein coupled receptor 1 family.

It localises to the cell membrane. Odorant receptor. The polypeptide is Olfactory receptor 10G4 (OR10G4) (Homo sapiens (Human)).